Here is a 632-residue protein sequence, read N- to C-terminus: Arginyl-tRNA--protein transferase 1 (632 aa).

Polar residues predominate over residues 1–18 (MSLKNDASSSHDGGSNRE). Disordered regions lie at residues 1-27 (MSLKNDASSSHDGGSNRESVIDDHGRR), 113-144 (KLDVQPREQRGASSSGDVSDTRRKTLGAAKSE), 284-312 (NGNISRGANSLDGSETLHAKKDSENHQAR), and 517-580 (PAAS…NDIN). A compositionally biased stretch (basic and acidic residues) spans 113 to 122 (KLDVQPREQR). Residues 285–296 (GNISRGANSLDG) show a composition bias toward polar residues. Residues 298–310 (ETLHAKKDSENHQ) show a composition bias toward basic and acidic residues. A compositionally biased stretch (acidic residues) spans 538 to 563 (SDEDEDEDEDDDDDDDDDEEMYETES). Basic and acidic residues predominate over residues 564–578 (EDSHIESDPGSKDND).

This sequence belongs to the R-transferase family.

The enzyme catalyses an N-terminal L-alpha-aminoacyl-[protein] + L-arginyl-tRNA(Arg) = an N-terminal L-arginyl-L-aminoacyl-[protein] + tRNA(Arg) + H(+). In terms of biological role, involved in the post-translational conjugation of arginine to the N-terminal aspartate or glutamate of a protein. This arginylation is required for degradation of the protein via the ubiquitin pathway. Component of the N-end rule pathway with ATE2 and PRT6. The N-end rule pathway regulates seed after-ripening, seedling sugar sensitivity, seedling lipid breakdown, and abscisic acid (ABA) sensitivity of germination. The end-rule pathway regulates various aspects of leaf and shoot development. Involved in the oxygen-dependent N-arginylation of RAP2-12, an activator of hypoxic gene expression. This N-terminal modification leads to ubiquitination by PRT6 and subsequent degradation of RAP2-12 under aerobic conditions. Has an important role in the progression of leaf senescence. Involved in disease resistance. The end-rule pathway plays a role in regulating the timing and amplitude of the immune response following infection with the bacterial pathogen Pseudomonas syringae pv tomato. Regulates the biosynthesis of plant-defense metabolites such as glucosinolates, and the biosynthesis and response to the phytohormone jasmonate (JA), which plays a key role in plant immunity. The polypeptide is Arginyl-tRNA--protein transferase 1 (Arabidopsis thaliana (Mouse-ear cress)).